A 106-amino-acid chain; its full sequence is Large ribosomal subunit protein uL24 (106 aa).

It belongs to the universal ribosomal protein uL24 family. As to quaternary structure, part of the 50S ribosomal subunit.

Its function is as follows. One of two assembly initiator proteins, it binds directly to the 5'-end of the 23S rRNA, where it nucleates assembly of the 50S subunit. Functionally, one of the proteins that surrounds the polypeptide exit tunnel on the outside of the subunit. This is Large ribosomal subunit protein uL24 from Parabacteroides distasonis (strain ATCC 8503 / DSM 20701 / CIP 104284 / JCM 5825 / NCTC 11152).